A 91-amino-acid polypeptide reads, in one-letter code: Large ribosomal subunit protein bL27 (91 aa).

Residues 1 to 24 (MAHKKGVGSSRNGRDSNPKMRGVK) are disordered.

This sequence belongs to the bacterial ribosomal protein bL27 family.

This is Large ribosomal subunit protein bL27 from Chloroflexus aggregans (strain MD-66 / DSM 9485).